Reading from the N-terminus, the 202-residue chain is Transmembrane 4 L6 family member 4 (202 aa).

Residues 1–9 (MCTGGCARC) are Cytoplasmic-facing. Residues 10-30 (LGGTLIPLAVFGLLANILLFF) traverse the membrane as a helical segment. The Extracellular segment spans residues 31–48 (PGGKVVNDKSHLSDEVWY). Residues 49-69 (FGGILGSGVLMIFPALVFLGL) form a helical membrane-spanning segment. The Cytoplasmic portion of the chain corresponds to 70–93 (QNNDCCGCCGNEGCGKRFAMFTST). The helical transmembrane segment at 94–114 (LFAVIGFLGAGYSFIVSAVSI) threads the bilayer. At 115 to 158 (NKGPKCFMANGTWGYPFHDGDYLKDQALWSECEEPRDVVPWNLT) the chain is on the extracellular side. N156 carries an N-linked (GlcNAc...) asparagine glycan. The chain crosses the membrane as a helical span at residues 159 to 179 (LFSILLVIGGIQMVLCAIQVI). Over 180 to 202 (NGLLGTLCGDCQCCGCCGGDGPV) the chain is Cytoplasmic.

It belongs to the L6 tetraspanin family.

It is found in the membrane. Regulates the adhesive and proliferative status of intestinal epithelial cells. Can mediate density-dependent cell proliferation. This Mus musculus (Mouse) protein is Transmembrane 4 L6 family member 4 (Tm4sf4).